The primary structure comprises 141 residues: Large ribosomal subunit protein bL17 (141 aa).

Positions 120-141 (TSAKGQDSGPVLTADEDEFEAA) are disordered.

Belongs to the bacterial ribosomal protein bL17 family. As to quaternary structure, part of the 50S ribosomal subunit. Contacts protein L32.

In Novosphingobium aromaticivorans (strain ATCC 700278 / DSM 12444 / CCUG 56034 / CIP 105152 / NBRC 16084 / F199), this protein is Large ribosomal subunit protein bL17.